A 242-amino-acid chain; its full sequence is ATP synthase subunit 4, mitochondrial (242 aa).

The transit peptide at 1-35 directs the protein to the mitochondrion; that stretch reads MSFRALTMRSAVARTALNNTIRSARVATPYLGIRH.

Belongs to the eukaryotic ATPase B chain family. F-type ATPases have 2 components, CF(1) - the catalytic core - and CF(0) - the membrane proton channel. In yeast, the dimeric form of ATP synthase consists of 17 polypeptides: alpha, beta, gamma, delta, epsilon, 4 (B), 5 (OSCP), 6 (A), 8, 9 (C), d, E (Tim11), f, g, h, i/j and k.

The protein localises to the mitochondrion. Its subcellular location is the mitochondrion inner membrane. Mitochondrial membrane ATP synthase (F(1)F(0) ATP synthase or Complex V) produces ATP from ADP in the presence of a proton gradient across the membrane which is generated by electron transport complexes of the respiratory chain. F-type ATPases consist of two structural domains, F(1) - containing the extramembraneous catalytic core, and F(0) - containing the membrane proton channel, linked together by a central stalk and a peripheral stalk. During catalysis, ATP synthesis in the catalytic domain of F(1) is coupled via a rotary mechanism of the central stalk subunits to proton translocation. Part of the complex F(0) domain and the peripheric stalk, which acts as a stator to hold the catalytic alpha(3)beta(3) subcomplex and subunit a/ATP6 static relative to the rotary elements. The protein is ATP synthase subunit 4, mitochondrial (ATP4) of Candida glabrata (strain ATCC 2001 / BCRC 20586 / JCM 3761 / NBRC 0622 / NRRL Y-65 / CBS 138) (Yeast).